We begin with the raw amino-acid sequence, 87 residues long: Defensin-like protein 175 (87 aa).

The N-terminal stretch at 1–23 is a signal peptide; sequence MAKATSSLVVPIIFLVIFALVEQ. Disulfide bonds link cysteine 27/cysteine 66, cysteine 36/cysteine 55, cysteine 39/cysteine 60, and cysteine 43/cysteine 62.

This sequence belongs to the DEFL family.

It is found in the secreted. This chain is Defensin-like protein 175, found in Arabidopsis thaliana (Mouse-ear cress).